Here is a 441-residue protein sequence, read N- to C-terminus: MEESKQNYDLTPLIAPNLDRHLVFPIFEFLQERQLYPDEQILKSKIQLLNQTNMVDYAMDIHKSLYHTEDAPQEMVERRTEVVARLKSLEEAAAPLVSFLLNPNAVQELRADKQYNLQMLKERYQIGPDQIEALYQYAKFQFECGNYSGAADYLYQYRTLCSNLERSLSALWGKLASEILMQNWDIALEELNRLKEIIDSKSFSSPLNQVQNRIWLMHWGLYIFFNHDNGRTQIIDLFNQDKYLNAIQTSAPHLLRYLATAFIVNKRRRPQLKEFIKVIQQEHYSYKDPIIEFLACVFVNYDFDGAQKKMKECEEVIVNDPFLGKRVEDGNFSTVPLRDEFLENARLFVFETYCKIHQRIDMGVLAEKLNLNYEEAERWIVNLIRTSKLDAKIDSESGTVIMEPTQPNVHEQLINHTKGLSGRTYKLVNQLLEHTQAQATR.

Residues 223–407 enclose the PCI domain; that stretch reads IFFNHDNGRT…GTVIMEPTQP (185 aa).

It belongs to the eIF-3 subunit E family. In terms of assembly, component of the eukaryotic translation initiation factor 3 (eIF-3) complex (Potential). Binds to the translation initiation factors TIF3F1 and TIF3H1. Associates with the CSN (COP9 signalosome) complex. Interacts directly with CSN1, CSN4, CSN6A, CSN6B, CSN7, CSN8 and TIF3C1. Binds to 40S small ribosomal subunit S9 (RPS9B and RPS9C) via its N-terminal part. Interacts with the 26S proteasome subunit RPN12a via its C-terminal part. Also binds with At1g27930 and At4g30620.

Its subcellular location is the cytoplasm. The protein localises to the nucleus. Component of the eukaryotic translation initiation factor 3 (eIF-3) complex, which is involved in protein synthesis of a specialized repertoire of mRNAs and, together with other initiation factors, stimulates binding of mRNA and methionyl-tRNAi to the 40S ribosome. The eIF-3 complex specifically targets and initiates translation of a subset of mRNAs involved in cell proliferation (Potential). Negatively regulates translation during flower development. The chain is Eukaryotic translation initiation factor 3 subunit E from Arabidopsis thaliana (Mouse-ear cress).